The sequence spans 608 residues: Glutamine--fructose-6-phosphate aminotransferase [isomerizing] (608 aa).

The active-site Nucleophile; for GATase activity is the Cys-2. Positions 2–217 (CGIVGIVGNQ…DGDWAVIGKT (216 aa)) constitute a Glutamine amidotransferase type-2 domain. SIS domains lie at 281–422 (ISDA…ARGT) and 456–598 (LSRE…VDQP). The For Fru-6P isomerization activity role is filled by Lys-603.

It is found in the cytoplasm. The enzyme catalyses D-fructose 6-phosphate + L-glutamine = D-glucosamine 6-phosphate + L-glutamate. In terms of biological role, involved in the production of the root hair deformation (HAD) factor specifically on medicago. In Rhizobium meliloti (strain 1021) (Ensifer meliloti), this protein is Glutamine--fructose-6-phosphate aminotransferase [isomerizing] (nodM).